The primary structure comprises 151 residues: 3-dehydroquinate dehydratase (151 aa).

The Proton acceptor role is filled by tyrosine 26. Positions 75, 81, and 88 each coordinate substrate. Histidine 101 (proton donor) is an active-site residue. Residues 102-103 (LS) and arginine 112 each bind substrate.

It belongs to the type-II 3-dehydroquinase family. In terms of assembly, homododecamer.

It carries out the reaction 3-dehydroquinate = 3-dehydroshikimate + H2O. The protein operates within metabolic intermediate biosynthesis; chorismate biosynthesis; chorismate from D-erythrose 4-phosphate and phosphoenolpyruvate: step 3/7. In terms of biological role, catalyzes a trans-dehydration via an enolate intermediate. The sequence is that of 3-dehydroquinate dehydratase from Shewanella halifaxensis (strain HAW-EB4).